The chain runs to 552 residues: Polypyrimidine tract-binding protein 3 (552 aa).

Methionine 1 is subject to N-acetylmethionine. A Phosphoserine modification is found at serine 17. A compositionally biased stretch (polar residues) spans 32 to 43 (MNSSTPSTANGN). The tract at residues 32–55 (MNSSTPSTANGNDSKKFKRDRPPC) is disordered. RRM domains are found at residues 59 to 143 (RVLH…NLPN), 182 to 258 (LRII…FSKL), and 358 to 432 (SVLL…LSKH). Lysine 65 is covalently cross-linked (Glycyl lysine isopeptide (Lys-Gly) (interchain with G-Cter in SUMO2)). Tyrosine 127 bears the Phosphotyrosine mark. Threonine 138 carries the phosphothreonine modification. A Glycyl lysine isopeptide (Lys-Gly) (interchain with G-Cter in SUMO2) cross-link involves residue lysine 216. Lysine 423 carries the post-translational modification N6-acetyllysine. A disordered region spans residues 435 to 455 (VQLPREGQEDQGLTKDFSNSP). Serine 454 carries the post-translational modification Phosphoserine. Residues 475–550 (ATLHLSNIPP…HHLRVSFSKS (76 aa)) enclose the RRM 4 domain.

As to quaternary structure, interacts with THBS4 (via the acidic amphipathic C-terminus). As to expression, expressed in several hematopoietic cell lines examined.

In terms of biological role, RNA-binding protein that mediates pre-mRNA alternative splicing regulation. Plays a role in the regulation of cell proliferation, differentiation and migration. Positive regulator of EPO-dependent erythropoiesis. Participates in cell differentiation regulation by repressing tissue-specific exons. Promotes FAS exon 6 skipping. Binds RNA, preferentially to both poly(G) and poly(U). The sequence is that of Polypyrimidine tract-binding protein 3 (PTBP3) from Homo sapiens (Human).